Consider the following 532-residue polypeptide: Glycerophosphocholine permease GIT4 (532 aa).

6 consecutive transmembrane segments (helical) span residues 55 to 75 (LWPA…NAGI), 98 to 118 (NIGS…GYIS), 126 to 146 (GMLT…VASW), 150 to 170 (VQGF…AIGA), 201 to 221 (AMID…LWIF), and 229 to 249 (VWRL…FIRL). A glycan (N-linked (GlcNAc...) asparagine) is linked at Asn266. A helical membrane pass occupies residues 272 to 292 (WWLIIKFYWFRLTVVSLIWFI). A glycan (N-linked (GlcNAc...) asparagine) is linked at Asn314. 3 helical membrane passes run 321–341 (WGWS…GAFI), 349–369 (LTLA…SACL), and 375–395 (HVAG…FGPG). The N-linked (GlcNAc...) asparagine glycan is linked to Asn396. Transmembrane regions (helical) follow at residues 416 to 436 (GIAA…FPAI) and 450 to 470 (VPFY…IFFV).

This sequence belongs to the major facilitator superfamily. Sugar transporter (TC 2.A.1.1) family.

It localises to the cell membrane. The catalysed reaction is sn-glycerol 3-phosphocholine(out) = sn-glycerol 3-phosphocholine(in). Functionally, glycerophosphodiester transporter that mediates uptake of glycerophosphocholine (GroPCho) with GIT3. Does not possess detectable glycerophosphoinositol (GroPIns) transport activity. The expanded ability to utilize GroPIns and GroPCho results from the organism's pathogenic nature and its need to occupy a variety of environments within its host organism. This possibility is buttressed by the fact that GroPIns and GroPCho are present and abundant in human fluids. This chain is Glycerophosphocholine permease GIT4, found in Candida albicans (strain SC5314 / ATCC MYA-2876) (Yeast).